We begin with the raw amino-acid sequence, 341 residues long: Phosphoribosylformylglycinamidine cyclo-ligase (341 aa).

The protein belongs to the AIR synthase family.

It localises to the cytoplasm. The enzyme catalyses 2-formamido-N(1)-(5-O-phospho-beta-D-ribosyl)acetamidine + ATP = 5-amino-1-(5-phospho-beta-D-ribosyl)imidazole + ADP + phosphate + H(+). It participates in purine metabolism; IMP biosynthesis via de novo pathway; 5-amino-1-(5-phospho-D-ribosyl)imidazole from N(2)-formyl-N(1)-(5-phospho-D-ribosyl)glycinamide: step 2/2. In Xanthomonas euvesicatoria pv. vesicatoria (strain 85-10) (Xanthomonas campestris pv. vesicatoria), this protein is Phosphoribosylformylglycinamidine cyclo-ligase.